The primary structure comprises 474 residues: PTS system N-acetylmuramic acid-specific EIIBC component (474 aa).

A PTS EIIB type-1 domain is found at 1 to 89 (MAKEISSELL…SELLGEAPVQ (89 aa)). Residues 1–123 (MAKEISSELL…LAKFATIFTP (123 aa)) are Cytoplasmic-facing. Cysteine 29 (phosphocysteine intermediate; for EIIB activity) is an active-site residue. Residues 115–474 (AKFATIFTPL…LFGCRNVNLD (360 aa)) enclose the PTS EIIC type-1 domain. The helical transmembrane segment at 124–144 (LIPGFIAAGLLLGIATLIATV) threads the bilayer. The Periplasmic portion of the chain corresponds to 145 to 157 (MHVPADAQGTLPD). A helical transmembrane segment spans residues 158-178 (ALNFMKVFSKGLFTFLVILVG). At 179-180 (YN) the chain is on the cytoplasmic side. A helical transmembrane segment spans residues 181 to 201 (AAQAFGGTGVNGAIIAALFLL). At 202-217 (GYNPAATTGYYAGFHD) the chain is on the periplasmic side. Residues 218–238 (FFGLPIDPRGNIIGVLIAAWA) form a helical membrane-spanning segment. Residues 239 to 260 (CARIEGMVRRFMPDDLDMLLTS) lie on the Cytoplasmic side of the membrane. The helical transmembrane segment at 261–281 (LITLLITATLAYLIIMPLGGW) threads the bilayer. At 282 to 301 (LFEGMSWLFMHLNSNPFGCA) the chain is on the periplasmic side. The chain crosses the membrane as a helical span at residues 302–322 (VLAGLFLIAVVFGVHQGFIPV). The Cytoplasmic portion of the chain corresponds to 323-334 (YLALMDSQGFNS). A helical membrane pass occupies residues 335 to 355 (LFPILSMAGAGQVGAALALYW). Topologically, residues 356-368 (RAQPHSALRSQVR) are periplasmic. Residues 369-389 (GAIIPGLLGVGEPLIYGVTLP) form a helical membrane-spanning segment. The Cytoplasmic portion of the chain corresponds to 390–393 (RMKP). The helical transmembrane segment at 394-414 (FVTACLGGAAGGLFIGLIAWW) threads the bilayer. Residues 415 to 440 (GLPMGLNSAFGPSGLVALPLMTSAQG) lie on the Periplasmic side of the membrane. The helical transmembrane segment at 441 to 461 (ILPAMAVYAGGILVAWVCGFI) threads the bilayer. Residues 462–474 (FTTLFGCRNVNLD) lie on the Cytoplasmic side of the membrane.

Its subcellular location is the cell inner membrane. The enzyme catalyses N-acetyl-beta-D-muramate(out) + N(pros)-phospho-L-histidyl-[protein] = N-acetyl-beta-D-muramate 6-phosphate(in) + L-histidyl-[protein]. Its function is as follows. The phosphoenolpyruvate-dependent sugar phosphotransferase system (sugar PTS), a major carbohydrate active transport system, catalyzes the phosphorylation of incoming sugar substrates concomitantly with their translocation across the cell membrane. This system is involved in N-acetylmuramic acid (MurNAc) transport, yielding cytoplasmic MurNAc-6-P. Is responsible for growth on MurNAc as the sole source of carbon and energy. Is also able to take up anhydro-N-acetylmuramic acid (anhMurNAc), but cannot phosphorylate the carbon 6, probably because of the 1,6-anhydro ring. This is PTS system N-acetylmuramic acid-specific EIIBC component (murP) from Escherichia coli (strain K12).